A 680-amino-acid polypeptide reads, in one-letter code: HEAT repeat-containing protein 3 (680 aa).

The segment covering 1 to 11 has biased composition (basic residues); the sequence is MGKSRTKRFKR. A disordered region spans residues 1 to 39; sequence MGKSRTKRFKRPQFSPTGDCQAEAAAAANGTGGEEDDGP. Serine 15 is subject to Phosphoserine. Low complexity predominate over residues 18-29; sequence GDCQAEAAAAAN. 2 HEAT repeats span residues 38–69 and 74–110; these read GPAA…VQQR and GLAR…SACG. Position 144 is a phosphoserine (serine 144). Threonine 340 is subject to Phosphothreonine.

Belongs to the nuclear import and ribosome assembly adapter family. As to quaternary structure, component of a hexameric 5S RNP precursor complex, composed of 5S RNA, RRS1, RPF2/BXDC1, RPL5, RPL11 and HEATR3; this complex acts as a precursor for ribosome assembly.

Plays a role in ribosome biogenesis and in nuclear import of the 60S ribosomal protein L5/large ribosomal subunit protein uL18 (RPL5). Required for proper erythrocyte maturation. The protein is HEAT repeat-containing protein 3 (HEATR3) of Homo sapiens (Human).